We begin with the raw amino-acid sequence, 107 residues long: Period circadian protein (107 aa).

The disordered stretch occupies residues 81 to 107 (ITNGSNTGTGTSSGSFQPPLLTEALLN). Residues 82–95 (TNGSNTGTGTSSGS) are compositionally biased toward low complexity.

As to quaternary structure, forms a heterodimer with timeless (TIM); the complex then translocates into the nucleus. Post-translationally, phosphorylated with a circadian rhythmicity, probably by the double-time protein (dbt). Phosphorylation could be implicated in the stability of per monomer and in the formation of heterodimer per-tim.

It is found in the nucleus. Its subcellular location is the cytoplasm. The protein localises to the perinuclear region. Essential for biological clock functions. Determines the period length of circadian and ultradian rhythms; an increase in PER dosage leads to shortened circadian rhythms and a decrease leads to lengthened circadian rhythms. Essential for the circadian rhythmicity of locomotor activity, eclosion behavior, and for the rhythmic component of the male courtship song that originates in the thoracic nervous system. The biological cycle depends on the rhythmic formation and nuclear localization of the TIM-PER complex. Light induces the degradation of TIM, which promotes elimination of PER. Nuclear activity of the heterodimer coordinatively regulates PER and TIM transcription through a negative feedback loop. Behaves as a negative element in circadian transcriptional loop. Does not appear to bind DNA, suggesting indirect transcriptional inhibition. This chain is Period circadian protein (per), found in Beris vallata (Common orange legionnaire).